A 536-amino-acid polypeptide reads, in one-letter code: Phosphoenolpyruvate carboxykinase (ATP) (536 aa).

Substrate-binding residues include Arg61, Tyr195, and Lys201. Residues Lys201, His220, and 236 to 244 (GLSGTGKTT) each bind ATP. 2 residues coordinate Mn(2+): Lys201 and His220. Mn(2+) is bound at residue Asp257. ATP-binding residues include Glu285, Arg322, and Thr447. A substrate-binding site is contributed by Arg322.

This sequence belongs to the phosphoenolpyruvate carboxykinase (ATP) family. Mn(2+) is required as a cofactor.

It is found in the cytoplasm. The catalysed reaction is oxaloacetate + ATP = phosphoenolpyruvate + ADP + CO2. It functions in the pathway carbohydrate biosynthesis; gluconeogenesis. Involved in the gluconeogenesis. Catalyzes the conversion of oxaloacetate (OAA) to phosphoenolpyruvate (PEP) through direct phosphoryl transfer between the nucleoside triphosphate and OAA. The protein is Phosphoenolpyruvate carboxykinase (ATP) of Mesorhizobium japonicum (strain LMG 29417 / CECT 9101 / MAFF 303099) (Mesorhizobium loti (strain MAFF 303099)).